Reading from the N-terminus, the 374-residue chain is DNA replication and repair protein RecF (374 aa).

Residue 34 to 41 participates in ATP binding; sequence GDNGAGKT.

Belongs to the RecF family.

Its subcellular location is the cytoplasm. Its function is as follows. The RecF protein is involved in DNA metabolism; it is required for DNA replication and normal SOS inducibility. RecF binds preferentially to single-stranded, linear DNA. It also seems to bind ATP. The chain is DNA replication and repair protein RecF from Rhizobium etli (strain ATCC 51251 / DSM 11541 / JCM 21823 / NBRC 15573 / CFN 42).